The sequence spans 183 residues: NAD(P)H-quinone oxidoreductase subunit I, chloroplastic (183 aa).

4Fe-4S ferredoxin-type domains lie at 55-84 (GRIH…VDWE) and 95-124 (KNYS…MTEE). The [4Fe-4S] cluster site is built by cysteine 64, cysteine 67, cysteine 70, cysteine 74, cysteine 104, cysteine 107, cysteine 110, and cysteine 114.

Belongs to the complex I 23 kDa subunit family. In terms of assembly, NDH is composed of at least 16 different subunits, 5 of which are encoded in the nucleus. It depends on [4Fe-4S] cluster as a cofactor.

It localises to the plastid. The protein localises to the chloroplast thylakoid membrane. The catalysed reaction is a plastoquinone + NADH + (n+1) H(+)(in) = a plastoquinol + NAD(+) + n H(+)(out). It carries out the reaction a plastoquinone + NADPH + (n+1) H(+)(in) = a plastoquinol + NADP(+) + n H(+)(out). In terms of biological role, NDH shuttles electrons from NAD(P)H:plastoquinone, via FMN and iron-sulfur (Fe-S) centers, to quinones in the photosynthetic chain and possibly in a chloroplast respiratory chain. The immediate electron acceptor for the enzyme in this species is believed to be plastoquinone. Couples the redox reaction to proton translocation, and thus conserves the redox energy in a proton gradient. This Marchantia polymorpha (Common liverwort) protein is NAD(P)H-quinone oxidoreductase subunit I, chloroplastic.